The chain runs to 131 residues: uncharacterized protein (131 aa).

Positions 13 to 32 are disordered; that stretch reads TYSPLPEPPPTPALGGQRGP.

This is an uncharacterized protein from Homo sapiens (Human).